Consider the following 760-residue polypeptide: Sphingosine kinase B (760 aa).

A disordered region spans residues 1–108 (MENNNNEPAE…NNNNNEPVTS (108 aa)). Basic and acidic residues predominate over residues 12-39 (VQEKGPKLKNDIDLNDQFKDEKEKKEEI). The segment covering 40–106 (SSSSIENKNN…NNNNNNNEPV (67 aa)) has biased composition (low complexity). Residues 247–383 (PKNRKIRILI…LDVCIVQQPT (137 aa)) enclose the DAGKc domain. ATP-binding positions include 257 to 259 (NPK) and Thr-288. 313-316 (SGDG) is a binding site for substrate. The active-site Proton donor/acceptor is Asp-315. Residues Glu-320 and 345 to 347 (GTG) each bind ATP. The disordered stretch occupies residues 394–438 (TVTTTTTTTSPTSASPTITSANNNNNNNNNNNNNNNNNNNNNNNN). Substrate is bound at residue Asp-461. ATP contacts are provided by Arg-468 and Arg-474. Residues 535–605 (DNDNNNKNKN…SSPRSDINMS (71 aa)) are disordered. The span at 549-597 (EINSTTSNNNNNNNTTTTSTSSSTSTSTSTSSLTATTTTAKSTNSLSSS) shows a compositional bias: low complexity. 734 to 736 (DGE) is an ATP binding site.

The catalysed reaction is a sphingoid base + ATP = a sphingoid 1-phosphate + ADP + H(+). Inhibited by N,N,-dimethylsphingosine. Functionally, catalyzes the phosphorylation of sphingosine to form sphingosine-1-phosphate (S1P), which probably acts intracellularly as a second messenger perhaps by promoting cell proliferation. The sequence is that of Sphingosine kinase B (sgkB) from Dictyostelium discoideum (Social amoeba).